The chain runs to 93 residues: HIG1 domain family member 1A, mitochondrial (93 aa).

The 93-residue stretch at 1–93 folds into the HIG1 domain; the sequence is MSTDTGVSLP…YREFWAKPKP (93 aa). Residue Ser2 is modified to N-acetylserine. Ser8 is modified (phosphoserine). The next 2 membrane-spanning stretches (helical) occupy residues 26 to 46 and 60 to 80; these read EAPFVPVGIAGFAAIVAYGLY and LIHMRVAAQGFVVGAMTVGMG.

As to quaternary structure, associates with cytochrome c oxidase (COX, complex IV); proposed complex component. Also associates with respiratory chain supercomplexes.

The protein resides in the mitochondrion membrane. The protein localises to the mitochondrion inner membrane. Its function is as follows. Proposed subunit of cytochrome c oxidase (COX, complex IV), which is the terminal component of the mitochondrial respiratory chain that catalyzes the reduction of oxygen to water. May play a role in the assembly of respiratory supercomplexes. The polypeptide is HIG1 domain family member 1A, mitochondrial (HIGD1A) (Homo sapiens (Human)).